Reading from the N-terminus, the 460-residue chain is MASRTLSGALALAAAATAVLAAPATVAHRSPPGTKDVTAVLFEWDYVSVAKECTSTLGPAGYGYVQVSPPAEHIQGSQWWTSYQPVSYKIAGRLGDRAAFRSMVNTCHAAGVKVVVDTVINHMSAGSGTGTGGSSYTKYDYPGLYSAPDFDDCTAEITDYQDRWNVQHCELVGLADLDTGEEYVRQTIAGYMNDLLSLGVDGFRIDAATHIPAEDLANIKSRLSNPNAYWKQEVIYGAGEPPKPGEYTGTGDVQEFRYAYDLKRVFTQEHLAYLKNYGEDWGYLSSTTAGVFVDNHDTERNGSTLNYKNDATYTLANVFMLAWPYGAPDINSGYEWSDPDARPPDGGHVDACWQNGWKCQHKWPEIASMVAFRNATRGEPVTDWWDDGADAIAFGRGSKGFVAINHESATVQRTYQTSLPAGTYCDVQSNTTVTVDSAGRFTAALGPDTALALHNGRTSC.

The first 21 residues, 1-21, serve as a signal peptide directing secretion; the sequence is MASRTLSGALALAAAATAVLA. Ca(2+) is bound by residues N121, Q167, and D176. D206 (nucleophile) is an active-site residue. H210 contributes to the Ca(2+) binding site. E233 serves as the catalytic Proton donor.

Belongs to the glycosyl hydrolase 13 family. Monomer. The cofactor is Ca(2+).

The catalysed reaction is Endohydrolysis of (1-&gt;4)-alpha-D-glucosidic linkages in polysaccharides containing three or more (1-&gt;4)-alpha-linked D-glucose units.. In Streptomyces thermoviolaceus, this protein is Alpha-amylase (amy).